The primary structure comprises 944 residues: Tyrosine-protein kinase transmembrane receptor ROR2 (944 aa).

Positions 1 to 33 are cleaved as a signal peptide; that stretch reads MARGWVRPSRVPLCARAVWTAAALLLWTPWTAG. Residues 34–403 lie on the Extracellular side of the membrane; sequence EVEDSEAIDT…CSPRDGSKMG (370 aa). The Ig-like C2-type domain occupies 55 to 145; the sequence is PTLKGYFLNF…VATNGLKTIT (91 aa). Asn-70 is a glycosylation site (N-linked (GlcNAc...) asparagine). 9 disulfides stabilise this stretch: Cys-83-Cys-135, Cys-174-Cys-239, Cys-182-Cys-232, Cys-223-Cys-264, Cys-252-Cys-300, Cys-256-Cys-286, Cys-316-Cys-394, Cys-337-Cys-377, and Cys-365-Cys-389. In terms of domain architecture, FZ spans 169-303; it reads QEDGFCQPYR…SPDAANCMRI (135 aa). N-linked (GlcNAc...) asparagine glycosylation occurs at Asn-188. One can recognise a Kringle domain in the interval 316–394; sequence CYNGSGADYR…RVELCDVPPC (79 aa). Residue Asn-318 is glycosylated (N-linked (GlcNAc...) asparagine). A helical transmembrane segment spans residues 404-424; the sequence is ILYILVPSIAIPLVIACLFFL. Topologically, residues 425 to 944 are cytoplasmic; that stretch reads VCMCRNKQKA…TEAAHVQLEA (520 aa). Positions 473-746 constitute a Protein kinase domain; the sequence is VRFMEELGED…PRFKDIHSRL (274 aa). ATP contacts are provided by residues 479 to 487 and Lys-507; that span reads LGEDRFGKV. Asp-615 serves as the catalytic Proton acceptor. A Phosphotyrosine; by autocatalysis modification is found at Tyr-646. Residues 757-779 form a disordered region; it reads SSAQTSGASNTTQTSSLSTSPVS. Residues 765–779 show a composition bias toward low complexity; sequence SNTTQTSSLSTSPVS. Residue Arg-785 is modified to Asymmetric dimethylarginine. 2 disordered regions span residues 850–879 and 898–929; these read QVPPQMVPKPSSHHSGSGSTSTGYVTTAPS and QNIAEDVAQSPVQEAEEEEEGSVPETELLGDN. Low complexity predominate over residues 857–872; sequence PKPSSHHSGSGSTSTG.

The protein belongs to the protein kinase superfamily. Tyr protein kinase family. ROR subfamily. As to quaternary structure, homodimer; promotes osteogenesis. Binds YWHAB. Interacts with WTIP. Interacts with ROR2. Mg(2+) is required as a cofactor.

The protein localises to the cell membrane. It catalyses the reaction L-tyrosyl-[protein] + ATP = O-phospho-L-tyrosyl-[protein] + ADP + H(+). Its function is as follows. Tyrosine-protein kinase receptor which may be involved in the early formation of the chondrocytes. It seems to be required for cartilage and growth plate development. Phosphorylates YWHAB, leading to induction of osteogenesis and bone formation. In contrast, has also been shown to have very little tyrosine kinase activity in vitro. May act as a receptor for wnt ligand WNT5A which may result in the inhibition of WNT3A-mediated signaling. The protein is Tyrosine-protein kinase transmembrane receptor ROR2 (Ror2) of Mus musculus (Mouse).